The chain runs to 337 residues: Glyceraldehyde-3-phosphate dehydrogenase (337 aa).

Residues 12–13 (RI), D34, and K79 contribute to the NAD(+) site. D-glyceraldehyde 3-phosphate is bound by residues 150-152 (SCT), T181, 210-211 (TG), and R233. Catalysis depends on C151, which acts as the Nucleophile. N315 contributes to the NAD(+) binding site.

The protein belongs to the glyceraldehyde-3-phosphate dehydrogenase family. In terms of assembly, homotetramer.

Its subcellular location is the cytoplasm. It carries out the reaction D-glyceraldehyde 3-phosphate + phosphate + NAD(+) = (2R)-3-phospho-glyceroyl phosphate + NADH + H(+). It participates in carbohydrate degradation; glycolysis; pyruvate from D-glyceraldehyde 3-phosphate: step 1/5. The chain is Glyceraldehyde-3-phosphate dehydrogenase (GPD) from Cochliobolus lunatus (Filamentous fungus).